The chain runs to 140 residues: Nucleoside diphosphate kinase (140 aa).

ATP contacts are provided by Lys9, Phe57, Arg85, Thr91, Arg102, and Asn112. The Pros-phosphohistidine intermediate role is filled by His115.

Belongs to the NDK family. As to quaternary structure, homotetramer. Requires Mg(2+) as cofactor.

It localises to the cytoplasm. It catalyses the reaction a 2'-deoxyribonucleoside 5'-diphosphate + ATP = a 2'-deoxyribonucleoside 5'-triphosphate + ADP. The enzyme catalyses a ribonucleoside 5'-diphosphate + ATP = a ribonucleoside 5'-triphosphate + ADP. Functionally, major role in the synthesis of nucleoside triphosphates other than ATP. The ATP gamma phosphate is transferred to the NDP beta phosphate via a ping-pong mechanism, using a phosphorylated active-site intermediate. The chain is Nucleoside diphosphate kinase from Chlorobaculum parvum (strain DSM 263 / NCIMB 8327) (Chlorobium vibrioforme subsp. thiosulfatophilum).